An 822-amino-acid polypeptide reads, in one-letter code: AP-1 complex subunit gamma-1 (822 aa).

The disordered stretch occupies residues 597–628 (EIVQTNGETEPAPLETKPPPSGPQPTSQANDL). The GAE domain occupies 702 to 817 (AGIPSITAYS…QDLAEVNNFP (116 aa)).

Belongs to the adaptor complexes large subunit family. Adaptor protein complex 1 (AP-1) is a heterotetramer composed of two large adaptins (gamma-type subunit AP1G1 and beta-type subunit AP1B1), a medium adaptin (mu-type subunit AP1M1 or AP1M2) and a small adaptin (sigma-type subunit AP1S1 or AP1S2 or AP1S3). Interacts (via GAE domain) with RABEP1. Interacts with EPS15. Interacts with SYNRG/gamma-synergin. Interacts (via GAE domain) with AP1AR (via coiled-coil domain). Interacts with CLN3 (via dileucine motif); this interaction facilitates lysosomal targeting. Interacts (via GAE domain) with AFTPH/aftiphilin; the interaction is required to recruit AFTPH/aftiphilin to the perinuclear region of the cell.

The protein resides in the golgi apparatus. The protein localises to the cytoplasmic vesicle. Its subcellular location is the clathrin-coated vesicle membrane. It localises to the cytoplasm. It is found in the perinuclear region. The protein resides in the clathrin-coated vesicle. The protein localises to the membrane. Its subcellular location is the clathrin-coated pit. Functionally, subunit of clathrin-associated adaptor protein complex 1 that plays a role in protein sorting in the late-Golgi/trans-Golgi network (TGN) and/or endosomes. The AP complexes mediate both the recruitment of clathrin to membranes and the recognition of sorting signals within the cytosolic tails of transmembrane cargo molecules. In association with AFTPH/aftiphilin in the aftiphilin/p200/gamma-synergin complex, involved in the trafficking of transferrin from early to recycling endosomes, and the membrane trafficking of furin and the lysosomal enzyme cathepsin D between the trans-Golgi network (TGN) and endosomes. In Pongo abelii (Sumatran orangutan), this protein is AP-1 complex subunit gamma-1 (AP1G1).